Here is a 225-residue protein sequence, read N- to C-terminus: mRNA-decapping protein D10 (225 aa).

The Nudix hydrolase domain occupies 35–218 (AKYPLSVIGI…NVIKYIINAV (184 aa)). The short motif at 116–137 (GKIKDLESITNCLVREIKEELN) is the Nudix box element. Glu-122 serves as a coordination point for Mg(2+). The active-site Nucleophile is Glu-131. Residue Glu-135 participates in Mn(2+) binding. Asp-157 contacts Mg(2+).

It belongs to the Nudix hydrolase family. Mg(2+) serves as cofactor. Mn(2+) is required as a cofactor.

Its function is as follows. Decapping enzyme required for the removal of the 5'-end m7GpppN cap tethered to viral and host mRNAs to allow their decay in cells. May therefore accelerate viral and cellular mRNA turnover to eliminate competing host mRNAs and allow stage-specific synthesis of viral proteins. Acceleration of the turnover of cellular transcripts may even promote the shutoff of host protein synthesis. The chain is mRNA-decapping protein D10 from Fowlpox virus (strain NVSL) (FPV).